The following is a 354-amino-acid chain: UDP-3-O-acylglucosamine N-acyltransferase (354 aa).

Histidine 247 acts as the Proton acceptor in catalysis.

It belongs to the transferase hexapeptide repeat family. LpxD subfamily. Homotrimer.

The catalysed reaction is a UDP-3-O-[(3R)-3-hydroxyacyl]-alpha-D-glucosamine + a (3R)-hydroxyacyl-[ACP] = a UDP-2-N,3-O-bis[(3R)-3-hydroxyacyl]-alpha-D-glucosamine + holo-[ACP] + H(+). It participates in bacterial outer membrane biogenesis; LPS lipid A biosynthesis. In terms of biological role, catalyzes the N-acylation of UDP-3-O-acylglucosamine using 3-hydroxyacyl-ACP as the acyl donor. Is involved in the biosynthesis of lipid A, a phosphorylated glycolipid that anchors the lipopolysaccharide to the outer membrane of the cell. The protein is UDP-3-O-acylglucosamine N-acyltransferase of Chlamydia trachomatis serovar L2b (strain UCH-1/proctitis).